The following is a 239-amino-acid chain: Ras-like protein B (239 aa).

GTP contacts are provided by residues 13–18 (GVGKTA), 29–35 (VETYDPT), 59–60 (AG), 139–142 (NKSD), and 169–171 (SAK). Positions 32–40 (YDPTIEDSY) match the Effector region motif. Positions 191–227 (RQQQQGGRAQDRRPTGLGPMRDRDAGPEYPKTFRPDR) are disordered. Residues 199-226 (AQDRRPTGLGPMRDRDAGPEYPKTFRPD) show a composition bias toward basic and acidic residues.

It belongs to the small GTPase superfamily. Ras family. As to quaternary structure, interacts with mpkA.

It catalyses the reaction GTP + H2O = GDP + phosphate + H(+). Its function is as follows. Ras-like protein involved in the activation of Ras protein signal transduction. Ras proteins bind GDP/GTP and possess intrinsic GTPase activity. Plays a role in hyphal morphology and conidiophore development. Required for full virulence. This is Ras-like protein B from Aspergillus fumigatus (strain ATCC MYA-4609 / CBS 101355 / FGSC A1100 / Af293) (Neosartorya fumigata).